Here is a 208-residue protein sequence, read N- to C-terminus: Large ribosomal subunit protein uL3 (208 aa).

The disordered stretch occupies residues glycine 116–alanine 148.

This sequence belongs to the universal ribosomal protein uL3 family. In terms of assembly, part of the 50S ribosomal subunit. Forms a cluster with proteins L14 and L19.

One of the primary rRNA binding proteins, it binds directly near the 3'-end of the 23S rRNA, where it nucleates assembly of the 50S subunit. The polypeptide is Large ribosomal subunit protein uL3 (Streptococcus pneumoniae (strain Hungary19A-6)).